Here is a 312-residue protein sequence, read N- to C-terminus: MAPKRLRIGTRASQLALWQANWTKSELEARYPGIQVELVKIKTMGDKILDVPLAQVGGKGLFVKEIEEAMLRGEIDLAVHSMKDVPTEFPEGLGLVVTTKREDPRDAFISDKVTFSELRQGARIGTSALRRQAQLLKARPDLEMVIIRGNVETRIRKLKEDNLDAVILAAAGLNRLGFTDVVTELLDTDFSIPAIGQGALGLECRLDDNATIEALAFLNHADTAAAVAAERALLKRCEGGCQVPIAAHGTVSGDTLTLVGFIASVDGKQTVRDRISGSTADAVKLGTELADRLLAAGGKAILEDVYQREIAH.

Cys241 is subject to S-(dipyrrolylmethanemethyl)cysteine.

The protein belongs to the HMBS family. Monomer. Requires dipyrromethane as cofactor.

The enzyme catalyses 4 porphobilinogen + H2O = hydroxymethylbilane + 4 NH4(+). The protein operates within porphyrin-containing compound metabolism; protoporphyrin-IX biosynthesis; coproporphyrinogen-III from 5-aminolevulinate: step 2/4. In terms of biological role, tetrapolymerization of the monopyrrole PBG into the hydroxymethylbilane pre-uroporphyrinogen in several discrete steps. This is Porphobilinogen deaminase from Trichlorobacter lovleyi (strain ATCC BAA-1151 / DSM 17278 / SZ) (Geobacter lovleyi).